The sequence spans 662 residues: Glycogen debranching enzyme (662 aa).

Asp338 functions as the Nucleophile in the catalytic mechanism. Glu373 functions as the Proton donor in the catalytic mechanism.

The protein belongs to the glycosyl hydrolase 13 family.

It catalyses the reaction Hydrolysis of (1-&gt;6)-alpha-D-glucosidic linkages to branches with degrees of polymerization of three or four glucose residues in limit dextrin.. Its pathway is glycan degradation; glycogen degradation. Its function is as follows. Removes maltotriose and maltotetraose chains that are attached by 1,6-alpha-linkage to the limit dextrin main chain, generating a debranched limit dextrin. The chain is Glycogen debranching enzyme from Yersinia enterocolitica serotype O:8 / biotype 1B (strain NCTC 13174 / 8081).